Consider the following 157-residue polypeptide: Arginine repressor (157 aa).

The protein belongs to the ArgR family.

The protein localises to the cytoplasm. It functions in the pathway amino-acid biosynthesis; L-arginine biosynthesis [regulation]. Functionally, regulates arginine biosynthesis genes. This Colwellia psychrerythraea (strain 34H / ATCC BAA-681) (Vibrio psychroerythus) protein is Arginine repressor.